We begin with the raw amino-acid sequence, 236 residues long: Cell division protein FtsQ (236 aa).

At 1 to 14 (MWDNHQALNQVADW) the chain is on the cytoplasmic side. A helical transmembrane segment spans residues 15-37 (LFTLAGLTTIYLMVQWTIHLPLL). Residues 37–111 (LPLKEVHIRS…NGLDVVVEEH (75 aa)) enclose the POTRA domain. Topologically, residues 38-236 (PLKEVHIRSN…VSGFAARGTR (199 aa)) are periplasmic.

It belongs to the FtsQ/DivIB family. FtsQ subfamily. Part of a complex composed of FtsB, FtsL and FtsQ.

Its subcellular location is the cell inner membrane. In terms of biological role, essential cell division protein. May link together the upstream cell division proteins, which are predominantly cytoplasmic, with the downstream cell division proteins, which are predominantly periplasmic. May control correct divisome assembly. The polypeptide is Cell division protein FtsQ (Nitrosospira multiformis (strain ATCC 25196 / NCIMB 11849 / C 71)).